Here is a 59-residue protein sequence, read N- to C-terminus: Venom protein 37.1 (59 aa).

Positions 1–18 (MVSTLMIASVKLRLYCTA) are cleaved as a signal peptide.

This sequence belongs to the non-disulfide-bridged peptide (NDBP) superfamily. Long chain multifunctional peptide (group 2) family. In terms of tissue distribution, expressed by the venom gland.

It is found in the secreted. This is Venom protein 37.1 from Lychas mucronatus (Chinese swimming scorpion).